The primary structure comprises 347 residues: GMP reductase (347 aa).

Residue 108 to 131 (ADFEKTKQILDLNPALNFVCIDVA) coordinates NADP(+). Gly-181 and Gly-183 together coordinate K(+). Cys-186 serves as the catalytic Thioimidate intermediate. 216–239 (IVSDGGCTTPGDVAKAFGGGADFV) is an NADP(+) binding site.

It belongs to the IMPDH/GMPR family. GuaC type 1 subfamily. In terms of assembly, homotetramer.

The catalysed reaction is IMP + NH4(+) + NADP(+) = GMP + NADPH + 2 H(+). In terms of biological role, catalyzes the irreversible NADPH-dependent deamination of GMP to IMP. It functions in the conversion of nucleobase, nucleoside and nucleotide derivatives of G to A nucleotides, and in maintaining the intracellular balance of A and G nucleotides. In Escherichia coli O127:H6 (strain E2348/69 / EPEC), this protein is GMP reductase.